We begin with the raw amino-acid sequence, 284 residues long: MAELVPFAVPIESDKTLLVWELSSGPTAEALHHSLFTAFSQFGLLYSVRVFPNAAVAHPGFYAVIKFYSARAARRAQKACDRKQLFQKSPVKVRLGTRHKAVQHQALALNSSRCQELANYYFGFNGWSKRIIKLQELSDLEERENEDSMVPLPKQSLKFFCALEVMLPSYDCRSPGVGLVEKPVDKVEEGPLSFLMKRKTAQKLAIQKALSDAFQKLLIVVLESGKIAVEYRPSEDIIDVRCEEELHGLIQVHCSPWKQCGQEEEEYLSDFSLEEEEFRLPELD.

Residues 1–92 (MAELVPFAVP…KQLFQKSPVK (92 aa)) are necessary for nuclear localization and for nucleolar accumulation in response to heat shock. Residues 15-98 (KTLLVWELSS…SPVKVRLGTR (84 aa)) form the RRM domain. The necessary for nuclear and nucleolar localization stretch occupies residues 90–133 (PVKVRLGTRHKAVQHQALALNSSRCQELANYYFGFNGWSKRIIK).

In terms of assembly, homodimer.

The protein resides in the nucleus. It is found in the cytoplasm. It localises to the nucleolus. Its subcellular location is the cajal body. The protein localises to the PML body. Functionally, may confer resistance to the antitumor agent cisplatin. Binds to DNA and RNA. In Macaca fascicularis (Crab-eating macaque), this protein is RAD52 motif-containing protein 1 (RDM1).